The chain runs to 165 residues: Transcription factor zip-10 (165 aa).

Residues 53-71 show a composition bias toward low complexity; the sequence is ASLGTSTTSSSRCSSTESS. The interval 53-99 is disordered; sequence ASLGTSTTSSSRCSSTESSAAPGKIRRGRPQQEIADGQDAHSQKKRH. The stretch at 104–150 forms a coiled coil; the sequence is ARQYRAQMRQKVENVKSLHDEKEQLELEVKALRQAVSGLQQENAQKD.

The protein resides in the nucleus. In terms of biological role, transcription factor that regulates the expression of genes in response to changes in temperature. In particular, binds to the promoter region of genes such as asp-17 in response to severe cold to warm temperature transitions to promote gene expression. Promotes stress-induced death, particularly in older animals, following cold shock followed by warming and this may have evolved as a form of kin survival under thermal stress conditions, favoring the survival of younger animals. The protein is Transcription factor zip-10 of Caenorhabditis elegans.